The primary structure comprises 249 residues: tRNA pseudouridine synthase A (249 aa).

The active-site Nucleophile is aspartate 52. Tyrosine 111 serves as a coordination point for substrate.

This sequence belongs to the tRNA pseudouridine synthase TruA family. In terms of assembly, homodimer.

It carries out the reaction uridine(38/39/40) in tRNA = pseudouridine(38/39/40) in tRNA. Functionally, formation of pseudouridine at positions 38, 39 and 40 in the anticodon stem and loop of transfer RNAs. The polypeptide is tRNA pseudouridine synthase A (Brachyspira hyodysenteriae (strain ATCC 49526 / WA1)).